The following is a 508-amino-acid chain: 3-octaprenyl-4-hydroxybenzoate carboxy-lyase (508 aa).

Asn172 lines the Mn(2+) pocket. Prenylated FMN contacts are provided by residues 175–177, 189–191, and 194–195; these read IYR, RWL, and RG. Glu238 serves as a coordination point for Mn(2+). Asp287 serves as the catalytic Proton donor. Residues 483–508 are disordered; it reads GEYGIATPPPPPRHSPPSDERGHDDV. Over residues 498-508 the composition is skewed to basic and acidic residues; it reads PPSDERGHDDV.

It belongs to the UbiD family. As to quaternary structure, homohexamer. It depends on prenylated FMN as a cofactor. The cofactor is Mn(2+).

Its subcellular location is the cell membrane. It catalyses the reaction a 4-hydroxy-3-(all-trans-polyprenyl)benzoate + H(+) = a 2-(all-trans-polyprenyl)phenol + CO2. The protein operates within cofactor biosynthesis; ubiquinone biosynthesis. Functionally, catalyzes the decarboxylation of 3-octaprenyl-4-hydroxy benzoate to 2-octaprenylphenol, an intermediate step in ubiquinone biosynthesis. This chain is 3-octaprenyl-4-hydroxybenzoate carboxy-lyase, found in Chromohalobacter salexigens (strain ATCC BAA-138 / DSM 3043 / CIP 106854 / NCIMB 13768 / 1H11).